A 583-amino-acid polypeptide reads, in one-letter code: MRRLLLAGILRRASSSPSSHHHLHLVRALSASSPLPASDADLRKYAGYALLLLGCGAATYYSFPLPPDALHKKAVPFKYAPLPDDLHAVSNWSATHEVHTRVLLQPDSLPALHDALAAAHGECRKLRPLGSGLSPNGLALSRAGMVNLALMDKVLGVDAKKKTVTVQAGIRVAELVDALREHGLTLQNFASIREQQVGGIIQVGAHGTGARLPPIDEQVISMKLVTPAKGTIELSREKDPDLFYLARCGLGGLGVVAEVTLQCVERHQLIEHTFVSNADEVKKNHKKWLSENKHIKYLWIPYTDTVVVVQCNPPSRWRTPKFTSKYGKDEAIQHVRDLYHESLKKYRTKAESNDPEVDQLSFTELRDRLLTLDPLDKDHVIRINKAEAEYWKKSEGYRMGWSDEILGFDCGGQQWVSETCFPAGTLAKPNMKDLDYIEELLQLIEKEDIPAPAPIEQRWTACSRSPMSPASSSQEDDIFSWVGIIMYLPTSDARQRKEITEEFFNYRSKTQTNLWDGYSAYEHWAKIEVPKDKDELAELQARLRKRFPVDAYNKARMELDPNKVLSNAKLEKLFPVTEVQHEK.

The transit peptide at 1 to 36 directs the protein to the mitochondrion; that stretch reads MRRLLLAGILRRASSSPSSHHHLHLVRALSASSPLP. The propeptide at 37-78 is removed in mature form; sequence ASDADLRKYAGYALLLLGCGAATYYSFPLPPDALHKKAVPFK. The helical transmembrane segment at 45-61 threads the bilayer; it reads YAGYALLLLGCGAATYY. Residues 95 to 266 enclose the FAD-binding PCMH-type domain; the sequence is THEVHTRVLL…AEVTLQCVER (172 aa).

FAD serves as cofactor.

It localises to the mitochondrion membrane. It catalyses the reaction L-galactono-1,4-lactone + 4 Fe(III)-[cytochrome c] = L-dehydroascorbate + 4 Fe(II)-[cytochrome c] + 5 H(+). Its pathway is cofactor biosynthesis; L-ascorbate biosynthesis. In terms of biological role, involved in the biosynthesis of ascorbic acid. The polypeptide is L-galactono-1,4-lactone dehydrogenase 1, mitochondrial (GLDH1) (Oryza sativa subsp. japonica (Rice)).